A 556-amino-acid chain; its full sequence is Non-structural maintenance of chromosome element 5 (556 aa).

Component of the Smc5-Smc6 complex which consists of KRE29, MMS21, NSE1, NSE3, NSE4, NSE5, SMC5 and SMC6. Interacts with KRE29.

The protein localises to the nucleus. The protein resides in the chromosome. Functionally, acts in a DNA repair pathway for removal of UV-induced DNA damage that is distinct from classical nucleotide excision repair and in repair of ionizing radiation damage. Functions in homologous recombination repair of DNA double strand breaks and in recovery of stalled replication forks. This is Non-structural maintenance of chromosome element 5 (NSE5) from Saccharomyces cerevisiae (strain ATCC 204508 / S288c) (Baker's yeast).